Reading from the N-terminus, the 616-residue chain is Chaperone protein HscA (616 aa).

This sequence belongs to the heat shock protein 70 family.

Functionally, chaperone involved in the maturation of iron-sulfur cluster-containing proteins. Has a low intrinsic ATPase activity which is markedly stimulated by HscB. Involved in the maturation of IscU. This Citrobacter koseri (strain ATCC BAA-895 / CDC 4225-83 / SGSC4696) protein is Chaperone protein HscA.